Consider the following 76-residue polypeptide: Protein OPG128 (76 aa).

Cysteines 17 and 21 form a disulfide.

Belongs to the orthopoxvirus OPG128 family. Interacts with sulfhydryl oxidase OPG072; this interaction involves formation of a transient disulfide-bonded intermediate, allowing disulfide bond transfer. Interacts with OPG088; this interaction involves formation of a transient disulfide-bonded intermediate, allowing disulfide bond transfer.

Functionally, late protein which probably participates in disulfide bond formation by functioning as a thiol-disulfide transfer protein between membrane-associated OPG072 and OPG08. The complete pathway for formation of disulfide bonds in intracellular virion membrane proteins sequentially involves oxidation of OPG072, OPG128 and OPG08. This Bos taurus (Bovine) protein is Protein OPG128 (OPG128).